The chain runs to 516 residues: Radial spoke head protein 3 homolog A (516 aa).

3 disordered regions span residues 1–45 (MAAT…GNPA), 120–139 (STLN…AEAS), and 190–233 (PTGQ…PVEG). Over residues 12 to 25 (AKKRPLHQRARRPA) the composition is skewed to basic residues. Polar residues predominate over residues 120 to 129 (STLNQASAMT). Basic residues predominate over residues 208-217 (QARRRALARK). A compositionally biased stretch (basic and acidic residues) spans 218–233 (RAQEQLKPRTPEPVEG). A Phosphothreonine; by MAPK1 modification is found at Thr-270. The stretch at 333–369 (YEEIRNVELAEVQRLEEQERRHREEKERRKKQQWEIV) forms a coiled coil. Residues 459-516 (EAMPPGQKTNVINGPNTVTDPSVTTLHTQKPVLDRVSSQPAPSQERKPVEEGGHLMAE) form a disordered region. Residues 465-486 (QKTNVINGPNTVTDPSVTTLHT) show a composition bias toward polar residues. Residues 502–516 (QERKPVEEGGHLMAE) show a composition bias toward basic and acidic residues.

The protein belongs to the flagellar radial spoke RSP3 family. In terms of assembly, may be a component of axonemal radial spokes. Interacts with IQUB. Interacts with phosphorylated MAPK1. Interacts with MEK1. Interacts with PKA regulatory subunits PRKAR1A and PRKAR1B. Interacts with RSPH1. Interacts with RSPH4A. Interacts with RSPH6A. Interacts with RSPH9. Interacts with CFAP61. Interacts with LRRC23.

The protein resides in the cytoplasm. It localises to the cytoskeleton. It is found in the cilium axoneme. Its subcellular location is the flagellum axoneme. May function as part of axonemal radial spoke complexes that play an important part in the motility of sperm and cilia. Functions as a protein kinase A-anchoring protein that scaffolds the cAMP-dependent protein kinase holoenzyme. May serve as a point of convergence for MAPK and PKA signaling in cilia. This chain is Radial spoke head protein 3 homolog A (Rsph3a), found in Mus musculus (Mouse).